Here is a 352-residue protein sequence, read N- to C-terminus: Dead end protein homolog 1 (352 aa).

RRM domains are found at residues 58-136 (SEVY…RSTE) and 138-218 (CELT…WLKP). The residue at position 336 (R336) is an Omega-N-methylarginine.

As to quaternary structure, interacts with APOBEC3. In terms of tissue distribution, isoform 1 and isoform 2 are expressed in testis. Isoform 1 is expressed continuously in post natal (PN) testis although levels are low between PN1 to PN6. Isoform 2 is expressed from PN 20 onwards. Isoform 2 is strongly expressed in meiotic and in post-meiotic germ cells of the testis with highest expression at the elongated spermatid stage (at protein level). Expressed in testis and heart. Expressed in germ cells and genital ridges. Not detected in testicular tumors.

It localises to the nucleus. Its subcellular location is the cytoplasm. In terms of biological role, RNA-binding factor that positively regulates gene expression by prohibiting miRNA-mediated gene suppression. Relieves miRNA repression in germline cells. Prohibits the function of several miRNAs by blocking the accessibility of target mRNAs. Sequence-specific RNA-binding factor that binds specifically to U-rich regions (URRs) in the 3' untranslated region (3'-UTR) of several mRNAs. Does not bind to miRNAs. Isoform 1 may play a role during primordial germ cell (PGC) survival. However, does not seem to be essential for PGC migration. The sequence is that of Dead end protein homolog 1 (Dnd1) from Mus musculus (Mouse).